A 473-amino-acid polypeptide reads, in one-letter code: Azaphilone pigments biosynthesis cluster protein L (473 aa).

An N-terminal signal peptide occupies residues 1-23 (MAELSIASGIVGLLSLGIQVTQS). ANK repeat units follow at residues 403-432 (EYGN…DVNA) and 436-465 (RYGN…NVST). A glycan (N-linked (GlcNAc...) asparagine) is linked at N462.

In terms of biological role, part of the gene cluster that mediates the biosynthesis of azaphilone pigments (MonAzPs), a complex mixture of compounds with a common azaphilone skeleton very widely used as food colorants. Seems not to play a direct role in the biosynthesis but might have a regulatorx function. This is Azaphilone pigments biosynthesis cluster protein L from Monascus ruber (Mold).